The following is a 114-amino-acid chain: Astacin-like metalloprotease toxin 4 (114 aa).

The Peptidase M12A domain maps to 1–114 (RETNENDYVD…GLLCLFKGSV (114 aa)). An intrachain disulfide couples cysteine 17 to cysteine 38. Histidine 46 provides a ligand contact to Zn(2+). The active site involves glutamate 47. Positions 50 and 56 each coordinate Zn(2+). Asparagine 88 carries N-linked (GlcNAc...) asparagine glycosylation.

Monomer. Zn(2+) serves as cofactor. As to expression, expressed by the venom gland.

The protein localises to the secreted. Inhibited by 1,10-phenanthroline. Functionally, zinc metalloprotease. Provoques deadhesion of endothelial cells from cell cultures, and also degradation of fibronectin, fibrinogen and gelatin in vitro. Its role in the venom is not fully understood but it might act as a spreading factor that facilitates diffusion of other venom toxins. Alternatively, it might be involved in the proteolytic processing of other venom toxins or it might play a role in extra-oral digestion of prey. The sequence is that of Astacin-like metalloprotease toxin 4 from Loxosceles laeta (South American recluse spider).